The primary structure comprises 412 residues: Multifunctional CCA protein (412 aa).

2 residues coordinate ATP: glycine 8 and arginine 11. Residues glycine 8 and arginine 11 each coordinate CTP. Mg(2+) contacts are provided by aspartate 21 and aspartate 23. ATP contacts are provided by arginine 91, arginine 137, and arginine 140. Positions 91, 137, and 140 each coordinate CTP. The HD domain maps to 228 to 329 (TGIHTLMTLS…VKLFDSIDAW (102 aa)).

It belongs to the tRNA nucleotidyltransferase/poly(A) polymerase family. Bacterial CCA-adding enzyme type 1 subfamily. Monomer. Can also form homodimers and oligomers. It depends on Mg(2+) as a cofactor. Ni(2+) serves as cofactor.

It catalyses the reaction a tRNA precursor + 2 CTP + ATP = a tRNA with a 3' CCA end + 3 diphosphate. The catalysed reaction is a tRNA with a 3' CCA end + 2 CTP + ATP = a tRNA with a 3' CCACCA end + 3 diphosphate. Catalyzes the addition and repair of the essential 3'-terminal CCA sequence in tRNAs without using a nucleic acid template. Adds these three nucleotides in the order of C, C, and A to the tRNA nucleotide-73, using CTP and ATP as substrates and producing inorganic pyrophosphate. tRNA 3'-terminal CCA addition is required both for tRNA processing and repair. Also involved in tRNA surveillance by mediating tandem CCA addition to generate a CCACCA at the 3' terminus of unstable tRNAs. While stable tRNAs receive only 3'-terminal CCA, unstable tRNAs are marked with CCACCA and rapidly degraded. The sequence is that of Multifunctional CCA protein from Shigella dysenteriae serotype 1 (strain Sd197).